A 432-amino-acid chain; its full sequence is Peptidase B (432 aa).

2 residues coordinate Mn(2+): K196 and D201. K208 is a catalytic residue. 3 residues coordinate Mn(2+): D219, D278, and E280. R282 is a catalytic residue.

It belongs to the peptidase M17 family. Homohexamer. The cofactor is Mn(2+).

It localises to the cytoplasm. It carries out the reaction Release of an N-terminal amino acid, Xaa, from a peptide or arylamide. Xaa is preferably Glu or Asp but may be other amino acids, including Leu, Met, His, Cys and Gln.. In terms of biological role, probably plays an important role in intracellular peptide degradation. This Vibrio vulnificus (strain CMCP6) protein is Peptidase B.